We begin with the raw amino-acid sequence, 334 residues long: Porphobilinogen deaminase (334 aa).

Cysteine 258 carries the post-translational modification S-(dipyrrolylmethanemethyl)cysteine.

The protein belongs to the HMBS family. Monomer. Dipyrromethane serves as cofactor.

It carries out the reaction 4 porphobilinogen + H2O = hydroxymethylbilane + 4 NH4(+). Its pathway is porphyrin-containing compound metabolism; protoporphyrin-IX biosynthesis; coproporphyrinogen-III from 5-aminolevulinate: step 2/4. Its function is as follows. Tetrapolymerization of the monopyrrole PBG into the hydroxymethylbilane pre-uroporphyrinogen in several discrete steps. This Ralstonia nicotianae (strain ATCC BAA-1114 / GMI1000) (Ralstonia solanacearum) protein is Porphobilinogen deaminase.